Reading from the N-terminus, the 325-residue chain is Golgi to ER traffic protein 4 homolog A (325 aa).

2 disordered regions span residues 1 to 22 (MAAAMAEQEGSKGSARNRGGVQ) and 306 to 325 (SGEDDDVEDGQEDSSPIELD). The span at 307–317 (GEDDDVEDGQE) shows a compositional bias: acidic residues.

It belongs to the GET4 family. Component of the bag6/bat3 complex.

Its subcellular location is the cytoplasm. The protein localises to the cytosol. As part of a cytosolic protein quality control complex, the bag6/bat3 complex, maintains misfolded and hydrophobic patches-containing proteins in a soluble state and participates in their proper delivery to the endoplasmic reticulum or alternatively can promote their sorting to the proteasome where they undergo degradation. The bag6/bat3 complex is involved in the post-translational delivery of tail-anchored/type II transmembrane proteins to the endoplasmic reticulum membrane. Similarly, the bag6/bat3 complex also functions as a sorting platform for proteins of the secretory pathway that are mislocalized to the cytosol either delivering them to the proteasome for degradation or to the endoplasmic reticulum. The bag6/bat3 complex also plays a role in the endoplasmic reticulum-associated degradation (ERAD), a quality control mechanism that eliminates unwanted proteins of the endoplasmic reticulum through their retrotranslocation to the cytosol and their targeting to the proteasome. It maintains these retrotranslocated proteins in an unfolded yet soluble state condition in the cytosol to ensure their proper delivery to the proteasome. In Xenopus laevis (African clawed frog), this protein is Golgi to ER traffic protein 4 homolog A (get4-a).